An 88-amino-acid chain; its full sequence is Small ribosomal subunit protein bS20 (88 aa).

A disordered region spans residues 1–20; the sequence is MANTAQARKRARQAVVQNAH.

Belongs to the bacterial ribosomal protein bS20 family.

Functionally, binds directly to 16S ribosomal RNA. The sequence is that of Small ribosomal subunit protein bS20 from Ralstonia pickettii (strain 12J).